A 171-amino-acid chain; its full sequence is Crossover junction endodeoxyribonuclease RuvC (171 aa).

Catalysis depends on residues aspartate 11, glutamate 71, and aspartate 143. Mg(2+)-binding residues include aspartate 11, glutamate 71, and aspartate 143.

Belongs to the RuvC family. Homodimer which binds Holliday junction (HJ) DNA. The HJ becomes 2-fold symmetrical on binding to RuvC with unstacked arms; it has a different conformation from HJ DNA in complex with RuvA. In the full resolvosome a probable DNA-RuvA(4)-RuvB(12)-RuvC(2) complex forms which resolves the HJ. Requires Mg(2+) as cofactor.

It localises to the cytoplasm. It catalyses the reaction Endonucleolytic cleavage at a junction such as a reciprocal single-stranded crossover between two homologous DNA duplexes (Holliday junction).. Its function is as follows. The RuvA-RuvB-RuvC complex processes Holliday junction (HJ) DNA during genetic recombination and DNA repair. Endonuclease that resolves HJ intermediates. Cleaves cruciform DNA by making single-stranded nicks across the HJ at symmetrical positions within the homologous arms, yielding a 5'-phosphate and a 3'-hydroxyl group; requires a central core of homology in the junction. The consensus cleavage sequence is 5'-(A/T)TT(C/G)-3'. Cleavage occurs on the 3'-side of the TT dinucleotide at the point of strand exchange. HJ branch migration catalyzed by RuvA-RuvB allows RuvC to scan DNA until it finds its consensus sequence, where it cleaves and resolves the cruciform DNA. This chain is Crossover junction endodeoxyribonuclease RuvC, found in Chelativorans sp. (strain BNC1).